We begin with the raw amino-acid sequence, 60 residues long: Large ribosomal subunit protein uL30 (60 aa).

It belongs to the universal ribosomal protein uL30 family. Part of the 50S ribosomal subunit.

The chain is Large ribosomal subunit protein uL30 from Leptothrix cholodnii (strain ATCC 51168 / LMG 8142 / SP-6) (Leptothrix discophora (strain SP-6)).